Here is a 331-residue protein sequence, read N- to C-terminus: Pantothenate kinase (331 aa).

109-116 (GSVAVGKS) is a binding site for ATP.

The protein belongs to the prokaryotic pantothenate kinase family.

The protein localises to the cytoplasm. The enzyme catalyses (R)-pantothenate + ATP = (R)-4'-phosphopantothenate + ADP + H(+). It functions in the pathway cofactor biosynthesis; coenzyme A biosynthesis; CoA from (R)-pantothenate: step 1/5. This is Pantothenate kinase from Rhizobium leguminosarum bv. trifolii (strain WSM2304).